Here is a 299-residue protein sequence, read N- to C-terminus: MNEFDRVRDYLTDLQDRICAAVEAIDGKARFAEDLWQRAEGGGGRTRILRDGAVFEQAGIGFSDVSGARLPPSASAHRPELAGATWRACGVSLVFHPHNPHIPTTHANVRYFRAERDGEMVAAWFGGGFDLTPFYPVDEDVMHWHRTAQALCAPFGEERYAAHKRWCDEYFFLRHRDETRGVGGLFFDDLGQDFERDFAYQRAVGDGFLDAYLPIVERRKDTPYGEAERAFQLYRRGRYVEFNLVYDRGTLFGLQSGGRAESILMSLPPQVRWEYGFQPQPGSAEARLADYLIPRDWLG.

Serine 92 is a binding site for substrate. 2 residues coordinate a divalent metal cation: histidine 96 and histidine 106. Histidine 106 serves as the catalytic Proton donor. Residue 108–110 (NVR) coordinates substrate. A divalent metal cation-binding residues include histidine 145 and histidine 175. The segment at 239–274 (YVEFNLVYDRGTLFGLQSGGRAESILMSLPPQVRWE) is important for dimerization. 257 to 259 (GGR) provides a ligand contact to substrate.

It belongs to the aerobic coproporphyrinogen-III oxidase family. As to quaternary structure, homodimer. Requires a divalent metal cation as cofactor.

Its subcellular location is the cytoplasm. The enzyme catalyses coproporphyrinogen III + O2 + 2 H(+) = protoporphyrinogen IX + 2 CO2 + 2 H2O. It participates in porphyrin-containing compound metabolism; protoporphyrin-IX biosynthesis; protoporphyrinogen-IX from coproporphyrinogen-III (O2 route): step 1/1. In terms of biological role, involved in the heme biosynthesis. Catalyzes the aerobic oxidative decarboxylation of propionate groups of rings A and B of coproporphyrinogen-III to yield the vinyl groups in protoporphyrinogen-IX. This Xanthomonas campestris pv. campestris (strain B100) protein is Oxygen-dependent coproporphyrinogen-III oxidase.